The chain runs to 407 residues: Tryptophan synthase beta chain (407 aa).

N6-(pyridoxal phosphate)lysine is present on lysine 91.

Belongs to the TrpB family. Tetramer of two alpha and two beta chains. It depends on pyridoxal 5'-phosphate as a cofactor.

The enzyme catalyses (1S,2R)-1-C-(indol-3-yl)glycerol 3-phosphate + L-serine = D-glyceraldehyde 3-phosphate + L-tryptophan + H2O. It functions in the pathway amino-acid biosynthesis; L-tryptophan biosynthesis; L-tryptophan from chorismate: step 5/5. The beta subunit is responsible for the synthesis of L-tryptophan from indole and L-serine. The sequence is that of Tryptophan synthase beta chain from Streptococcus pneumoniae serotype 2 (strain D39 / NCTC 7466).